The primary structure comprises 263 residues: 22 kDa alpha-zein 16 (263 aa).

The N-terminal stretch at 1 to 21 (MATKILALLALLALLVSATNA) is a signal peptide.

The protein belongs to the zein family. As to expression, expressed in developing endosperm.

Zeins are major seed storage proteins. In Zea mays (Maize), this protein is 22 kDa alpha-zein 16.